Here is a 99-residue protein sequence, read N- to C-terminus: Aspartyl/glutamyl-tRNA(Asn/Gln) amidotransferase subunit C (99 aa).

Belongs to the GatC family. Heterotrimer of A, B and C subunits.

The enzyme catalyses L-glutamyl-tRNA(Gln) + L-glutamine + ATP + H2O = L-glutaminyl-tRNA(Gln) + L-glutamate + ADP + phosphate + H(+). It carries out the reaction L-aspartyl-tRNA(Asn) + L-glutamine + ATP + H2O = L-asparaginyl-tRNA(Asn) + L-glutamate + ADP + phosphate + 2 H(+). Its function is as follows. Allows the formation of correctly charged Asn-tRNA(Asn) or Gln-tRNA(Gln) through the transamidation of misacylated Asp-tRNA(Asn) or Glu-tRNA(Gln) in organisms which lack either or both of asparaginyl-tRNA or glutaminyl-tRNA synthetases. The reaction takes place in the presence of glutamine and ATP through an activated phospho-Asp-tRNA(Asn) or phospho-Glu-tRNA(Gln). This is Aspartyl/glutamyl-tRNA(Asn/Gln) amidotransferase subunit C from Albidiferax ferrireducens (strain ATCC BAA-621 / DSM 15236 / T118) (Rhodoferax ferrireducens).